A 268-amino-acid chain; its full sequence is MTGLAIRNISMRFDLPNGGSVQALQDVSLDIKQGEIMSVLGPSGCGKTTLLNIVAGFLAPTDGVIELNGHEVHGPNAERGMVFQKGALFEWMSVRENVSFGPRMKGERASDYSANVDHLLDVVGLQDFKEKAIYELSGGMQQRVALARCLANDPDVILMDEPLGALDALTREKMQSLVLKLWKETGKTIILITHSVEEALLLGERLIVMAPRPGRIHKEYRLPFADEGVDADLREVKKNPKFAEVREEILGMIWDMEEEIMGRTEASA.

The ABC transporter domain occupies 4–236; the sequence is LAIRNISMRF…EGVDADLREV (233 aa). Position 41-48 (41-48) interacts with ATP; it reads GPSGCGKT.

It belongs to the ABC transporter superfamily. Taurine importer (TC 3.A.1.17.1) family. As to quaternary structure, the complex is composed of two ATP-binding proteins (TauB), two transmembrane proteins (TauC) and a solute-binding protein (TauA).

It localises to the cell inner membrane. The enzyme catalyses taurine(out) + ATP + H2O = taurine(in) + ADP + phosphate + H(+). Part of the ABC transporter complex TauABC involved in taurine import. Responsible for energy coupling to the transport system. The chain is Taurine import ATP-binding protein TauB from Jannaschia sp. (strain CCS1).